Here is a 265-residue protein sequence, read N- to C-terminus: Zearalenone hydrolase (265 aa).

3 residues coordinate zearalenone: glycine 35, serine 105, and serine 106. The active site involves serine 105. Glutamate 129 is an active-site residue. Zearalenone contacts are provided by tryptophan 185, tyrosine 189, and histidine 243. Histidine 243 is an active-site residue.

The protein belongs to the AB hydrolase superfamily. Hydrolase RutD family. As to quaternary structure, homodimer.

It catalyses the reaction zearalenone + H2O = hydrolyzed zearalenone + H(+). Lactonohydrolase that specifically hydrolyzes zearalenone (ZEN), an oestrogenic mycotoxin produced by numerous Fusarium specie, into a non-toxic alkylresorcinol product. The sequence is that of Zearalenone hydrolase from Cladophialophora bantiana (strain ATCC 10958 / CDC1940 / 8579 / CBS 173.52) (Xylohypha bantiana).